Here is a 452-residue protein sequence, read N- to C-terminus: Exodeoxyribonuclease 7 large subunit (452 aa).

Belongs to the XseA family. As to quaternary structure, heterooligomer composed of large and small subunits.

It is found in the cytoplasm. The catalysed reaction is Exonucleolytic cleavage in either 5'- to 3'- or 3'- to 5'-direction to yield nucleoside 5'-phosphates.. Its function is as follows. Bidirectionally degrades single-stranded DNA into large acid-insoluble oligonucleotides, which are then degraded further into small acid-soluble oligonucleotides. This chain is Exodeoxyribonuclease 7 large subunit, found in Bordetella avium (strain 197N).